The chain runs to 252 residues: Methionine aminopeptidase (252 aa).

Residue H76 participates in substrate binding. A divalent metal cation-binding residues include D93, D104, and H168. H175 provides a ligand contact to substrate. A divalent metal cation contacts are provided by E202 and E233.

The protein belongs to the peptidase M24A family. Methionine aminopeptidase type 1 subfamily. Monomer. The cofactor is Co(2+). Requires Zn(2+) as cofactor. Mn(2+) serves as cofactor. It depends on Fe(2+) as a cofactor.

It carries out the reaction Release of N-terminal amino acids, preferentially methionine, from peptides and arylamides.. Its function is as follows. Removes the N-terminal methionine from nascent proteins. The N-terminal methionine is often cleaved when the second residue in the primary sequence is small and uncharged (Met-Ala-, Cys, Gly, Pro, Ser, Thr, or Val). Requires deformylation of the N(alpha)-formylated initiator methionine before it can be hydrolyzed. The protein is Methionine aminopeptidase of Staphylococcus aureus (strain MRSA252).